Reading from the N-terminus, the 912-residue chain is Lateral signaling target protein 2 homolog (912 aa).

Residues 323 to 332 are compositionally biased toward low complexity; the sequence is NVNTSNNSDN. 4 disordered regions span residues 323 to 360, 455 to 610, 664 to 745, and 769 to 846; these read NVNT…SSFY, ADSG…ESSQ, NSSP…ASSA, and GGGS…APPR. Basic and acidic residues predominate over residues 333–355; sequence SDSRVDDSPNDELRHESETRDNR. Polar residues predominate over residues 455 to 468; that stretch reads ADSGLGTANPSVDN. Residues 486-505 are compositionally biased toward acidic residues; it reads SSEEGEIDEYDNEEDDEDSD. Residues 530–544 show a composition bias toward basic residues; sequence YRTHKQQHHHRHRRS. Composition is skewed to polar residues over residues 545–556 and 572–590; these read SGSIMSATSSRK and VPSN…DTSP. Over residues 591 to 610 the composition is skewed to low complexity; it reads SSGNQSECSSTSSTTGESSQ. Residues 682-699 show a composition bias toward basic and acidic residues; the sequence is DKPKEPDPTDLFEFRASE. Composition is skewed to polar residues over residues 705 to 717, 735 to 745, 780 to 801, and 822 to 834; these read PGQN…QSIY, PGTSPIRASSA, ERSV…ATDS, and SRSS…NGTS. An FYVE-type zinc finger spans residues 850–910; sequence DGDAPRCMAC…VCRDCYVREV (61 aa). Residues Cys856, Cys859, Cys872, Cys875, Cys880, Cys883, Cys902, and Cys905 each contribute to the Zn(2+) site.

This sequence belongs to the lst-2 family.

Functionally, negative regulator of epidermal growth factor receptor (EGFR) signaling. The polypeptide is Lateral signaling target protein 2 homolog (Aedes aegypti (Yellowfever mosquito)).